The chain runs to 236 residues: 1-(5-phosphoribosyl)-5-[(5-phosphoribosylamino)methylideneamino] imidazole-4-carboxamide isomerase (236 aa).

Asp-8 serves as the catalytic Proton acceptor. Asp-129 serves as the catalytic Proton donor.

Belongs to the HisA/HisF family.

Its subcellular location is the cytoplasm. It carries out the reaction 1-(5-phospho-beta-D-ribosyl)-5-[(5-phospho-beta-D-ribosylamino)methylideneamino]imidazole-4-carboxamide = 5-[(5-phospho-1-deoxy-D-ribulos-1-ylimino)methylamino]-1-(5-phospho-beta-D-ribosyl)imidazole-4-carboxamide. It participates in amino-acid biosynthesis; L-histidine biosynthesis; L-histidine from 5-phospho-alpha-D-ribose 1-diphosphate: step 4/9. The polypeptide is 1-(5-phosphoribosyl)-5-[(5-phosphoribosylamino)methylideneamino] imidazole-4-carboxamide isomerase (Methanocorpusculum labreanum (strain ATCC 43576 / DSM 4855 / Z)).